The chain runs to 342 residues: Probable RNA methyltransferase PST_2231 (342 aa).

Glutamate 91 acts as the Proton acceptor in catalysis. One can recognise a Radical SAM core domain in the interval 94–320 (LLPRDGLCVS…TKVRNSAGQD (227 aa)). Cysteine 101 and cysteine 325 are joined by a disulfide. [4Fe-4S] cluster-binding residues include cysteine 108, cysteine 112, and cysteine 115. Residues 153–154 (GE), serine 183, 206–208 (SLH), and asparagine 282 contribute to the S-adenosyl-L-methionine site. Cysteine 325 (S-methylcysteine intermediate) is an active-site residue.

It belongs to the radical SAM superfamily. RlmN family. It depends on [4Fe-4S] cluster as a cofactor.

The protein resides in the cytoplasm. In Stutzerimonas stutzeri (strain A1501) (Pseudomonas stutzeri), this protein is Probable RNA methyltransferase PST_2231.